The following is a 91-amino-acid chain: Small ribosomal subunit protein uS19 (91 aa).

It belongs to the universal ribosomal protein uS19 family.

Functionally, protein S19 forms a complex with S13 that binds strongly to the 16S ribosomal RNA. This chain is Small ribosomal subunit protein uS19, found in Dechloromonas aromatica (strain RCB).